We begin with the raw amino-acid sequence, 196 residues long: UPF0056 membrane protein BUsg_434 (196 aa).

Helical transmembrane passes span 8-28 (TILL…MTIL), 45-65 (IIAL…LTIL), 71-91 (TVSI…IFPS), 105-125 (FLVP…TLML), 134-154 (MPYL…ILLL), and 174-194 (MGLI…KAWF).

The protein belongs to the UPF0056 (MarC) family.

It localises to the cell membrane. This Buchnera aphidicola subsp. Schizaphis graminum (strain Sg) protein is UPF0056 membrane protein BUsg_434.